We begin with the raw amino-acid sequence, 155 residues long: MASRSAGSLITHNNVTYIPPALMPGYRGHIPSASFTYGDTYGNTSARCFQDFRSTVLNSSRSPYCQGGQFPTSHSNDPALVIGHRSRGWDRFLHSPSWSRYNVDFKRSDELKQFHRAAEQHRDHYRDKSGTAHQVPHFIVPVKNPQTFPLPQQVL.

It belongs to the CIMIP2 family.

The protein localises to the cytoplasm. Its subcellular location is the cytoskeleton. It is found in the cilium axoneme. In terms of biological role, microtubule inner protein (MIP) part of the dynein-decorated doublet microtubules (DMTs) in cilia axoneme, which is required for motile cilia beating. This is Ciliary microtubule inner protein 2C (cimip2cb) from Xenopus laevis (African clawed frog).